Consider the following 337-residue polypeptide: Large ribosomal subunit protein uL3 (337 aa).

Residues 1 to 20 (MASIHRPKRGSLAFSPRKRA) form a disordered region.

This sequence belongs to the universal ribosomal protein uL3 family. In terms of assembly, part of the 50S ribosomal subunit. Forms a cluster with proteins L14 and L24e.

In terms of biological role, one of the primary rRNA binding proteins, it binds directly near the 3'-end of the 23S rRNA, where it nucleates assembly of the 50S subunit. The sequence is that of Large ribosomal subunit protein uL3 from Methanosarcina mazei (strain ATCC BAA-159 / DSM 3647 / Goe1 / Go1 / JCM 11833 / OCM 88) (Methanosarcina frisia).